The sequence spans 448 residues: Tryptamine benzoyltransferase 2 (448 aa).

Residues 1-20 are disordered; sequence MEITSSAMLKPAPTPTPHPL. Active-site proton acceptor residues include H155 and D386.

Belongs to the plant acyltransferase family.

In terms of biological role, hydroxycinnamoyl transferase that catalyzes the transfer of an acyl from benzoyl-CoA to tryptamine, to produce benzoyl tryptamine. Serotonin and tyramine serve as acyl acceptors in vitro. Specific for benzoyl-CoA as acyl donor. Has no activity with p-coumaroyl-CoA, caffeoyl-CoA, or feruloyl-CoA as acyl donors. The polypeptide is Tryptamine benzoyltransferase 2 (Oryza sativa subsp. japonica (Rice)).